Consider the following 209-residue polypeptide: MIAIIDYGMGNIRSVEQALKYIGAEYIVTSNKKEILRSDGVILPGVGAFPKAMDVLEERDLVCVLKEVCDIGKPLLGICLGMQLLFERSEELKDCSGLGLLPGEIRKLKVSYKIPHMGWNELRKEREFPLWNGLVDGSFVYYVHSYYADCPDEIVCGVSDYGMQVPGFVAKGNVFGAQFHPEKSGEIGMQILKNFQGVVEAWKSSQLSI.

Positions Met1–Ser205 constitute a Glutamine amidotransferase type-1 domain. Catalysis depends on Cys79, which acts as the Nucleophile. Residues His180 and Glu182 contribute to the active site.

As to quaternary structure, heterodimer of HisH and HisF.

It localises to the cytoplasm. It carries out the reaction 5-[(5-phospho-1-deoxy-D-ribulos-1-ylimino)methylamino]-1-(5-phospho-beta-D-ribosyl)imidazole-4-carboxamide + L-glutamine = D-erythro-1-(imidazol-4-yl)glycerol 3-phosphate + 5-amino-1-(5-phospho-beta-D-ribosyl)imidazole-4-carboxamide + L-glutamate + H(+). It catalyses the reaction L-glutamine + H2O = L-glutamate + NH4(+). The protein operates within amino-acid biosynthesis; L-histidine biosynthesis; L-histidine from 5-phospho-alpha-D-ribose 1-diphosphate: step 5/9. IGPS catalyzes the conversion of PRFAR and glutamine to IGP, AICAR and glutamate. The HisH subunit catalyzes the hydrolysis of glutamine to glutamate and ammonia as part of the synthesis of IGP and AICAR. The resulting ammonia molecule is channeled to the active site of HisF. The polypeptide is Imidazole glycerol phosphate synthase subunit HisH (Bacillus cereus (strain B4264)).